The following is a 116-amino-acid chain: MAAAAFDPLGPLPVYLVSVRLGIYEDEHHRVWIVANVETSHSSHGNRRRTHVTVHLWKLIPQQVIPFNPLNYDFLPTTWKLESRNIYWATDGTHWRLLDHSQLGDTEQLILMLVLG.

It belongs to the TCL1 family.

This is Protein TCL1B1 (Tcl1b1) from Mus musculus (Mouse).